The primary structure comprises 293 residues: Formamidopyrimidine-DNA glycosylase (293 aa).

Pro2 serves as the catalytic Schiff-base intermediate with DNA. Catalysis depends on Glu3, which acts as the Proton donor. The active-site Proton donor; for beta-elimination activity is the Lys58. Positions 104, 123, and 166 each coordinate DNA. The FPG-type zinc finger occupies 257–293 (AAYDREGERCRTDGCGGAVKRFVQNGRSTFWCSGCQK). Arg283 serves as the catalytic Proton donor; for delta-elimination activity.

The protein belongs to the FPG family. Monomer. Zn(2+) serves as cofactor.

The enzyme catalyses Hydrolysis of DNA containing ring-opened 7-methylguanine residues, releasing 2,6-diamino-4-hydroxy-5-(N-methyl)formamidopyrimidine.. The catalysed reaction is 2'-deoxyribonucleotide-(2'-deoxyribose 5'-phosphate)-2'-deoxyribonucleotide-DNA = a 3'-end 2'-deoxyribonucleotide-(2,3-dehydro-2,3-deoxyribose 5'-phosphate)-DNA + a 5'-end 5'-phospho-2'-deoxyribonucleoside-DNA + H(+). In terms of biological role, involved in base excision repair of DNA damaged by oxidation or by mutagenic agents. Acts as a DNA glycosylase that recognizes and removes damaged bases. Has a preference for oxidized purines, such as 7,8-dihydro-8-oxoguanine (8-oxoG). Has AP (apurinic/apyrimidinic) lyase activity and introduces nicks in the DNA strand. Cleaves the DNA backbone by beta-delta elimination to generate a single-strand break at the site of the removed base with both 3'- and 5'-phosphates. The polypeptide is Formamidopyrimidine-DNA glycosylase (Rhodopseudomonas palustris (strain BisB5)).